The following is a 511-amino-acid chain: Phosphoenolpyruvate carboxylase (511 aa).

Belongs to the PEPCase type 2 family. In terms of assembly, homotetramer. Requires Mg(2+) as cofactor.

The catalysed reaction is oxaloacetate + phosphate = phosphoenolpyruvate + hydrogencarbonate. Functionally, catalyzes the irreversible beta-carboxylation of phosphoenolpyruvate (PEP) to form oxaloacetate (OAA), a four-carbon dicarboxylic acid source for the tricarboxylic acid cycle. The chain is Phosphoenolpyruvate carboxylase from Saccharolobus islandicus (strain Y.N.15.51 / Yellowstone #2) (Sulfolobus islandicus).